We begin with the raw amino-acid sequence, 206 residues long: MAVRSKSSKAWLHEHINDQYVHMAQKDGYRARAAYKLLEINEKDKIIKPGTVLADLGSAPGSWSQVAAKLTGTSGAVFALDILPMEAIGGVSFIQGDFRENDVLAQFETLLDNRPLDLVICDMAPNMSGNAVSDQARSFYLCELALDFASQHLKTGGSFLVKVFQGAGYQEYMAAMREIFGTVQTRKPEASRNRSSEIYLLGKNKR.

S-adenosyl-L-methionine contacts are provided by G61, W63, D81, D97, and D122. K162 (proton acceptor) is an active-site residue.

It belongs to the class I-like SAM-binding methyltransferase superfamily. RNA methyltransferase RlmE family.

Its subcellular location is the cytoplasm. It catalyses the reaction uridine(2552) in 23S rRNA + S-adenosyl-L-methionine = 2'-O-methyluridine(2552) in 23S rRNA + S-adenosyl-L-homocysteine + H(+). Functionally, specifically methylates the uridine in position 2552 of 23S rRNA at the 2'-O position of the ribose in the fully assembled 50S ribosomal subunit. This Neisseria gonorrhoeae (strain ATCC 700825 / FA 1090) protein is Ribosomal RNA large subunit methyltransferase E.